The sequence spans 760 residues: H(+)/Cl(-) exchange transporter 4 (760 aa).

Topologically, residues 1-67 (MVNAGAMSGS…WEFIKSLLDA (67 aa)) are cytoplasmic. Residues 14-63 (MDFLDEPFPDVGTYEDFHTIDWLREKSRDTDRHRKITSKSKESIWEFIKS) form a required for localization in the endoplasmic reticulum region. 2 helical membrane-spanning segments follow: residues 68–105 (WSGWVVMLLIGLLAGTLAGVIDLAVDWMTDLKEGVCLS) and 151–174 (LNYLMYILWALLFAFLAVSLVRVF). The Selectivity filter part_1 motif lies at 180 to 184 (GSGIP). Ser-181 serves as a coordination point for chloride. An intramembrane region (helical) is located at residues 183–190 (IPEIKTIL). 2 helical membrane-spanning segments follow: residues 200-218 (GKWTLLIKTVTLVLVVSSG) and 224-243 (EGPLVHVACCCGNFFSSLFS). The Selectivity filter part_2 signature appears at 222 to 226 (GKEGP). 2 consecutive intramembrane regions (helical) follow at residues 255–267 (VLSAAAAAGVSVA) and 271–279 (PIGGVLFSL). 5 helical membrane passes run 291–309 (LWRSFFAALVAAFTLRSIN), 333–358 (FPFILLGVFGGLWGTLFIRCNIAWCR), 365–385 (LGKYPVLEVIVVTAITAIIAY), 442–462 (MWQLALALIFKIVVTIFTFGM), and 467–486 (GLFIPSMAVGAIAGRMVGIG). The short motif at 467–471 (GLFIP) is the Selectivity filter part_3 element. Phe-469 contacts chloride. Intramembrane regions (helical) lie at residues 514–528 (GLYAMVGAAACLGGV) and 532–543 (TVSLVVIMFELT). The note=Loop between two helices intramembrane region spans 544-547 (GGLE). Residues 548–566 (YIVPLMAAAVTSKWVADAF) form a helical membrane-spanning segment. At 567 to 760 (GKEGIYEAHI…NQDPESIMFN (194 aa)) the chain is on the cytoplasmic side. Residue Tyr-572 participates in chloride binding. The 67-residue stretch at 600–666 (MRPRRGEPPL…AIKNARQRQE (67 aa)) folds into the CBS 1 domain. ATP contacts are provided by residues Ser-610 and 631–633 (YNG). The tract at residues 667–696 (GIVSNSIMYFTEEPPELPANSPHPLKLRRI) is required for localization in the endoplasmic reticulum. The CBS 2 domain maps to 697 to 755 (LNLSPFTVTDHTPMETVVDIFRKLGLRQCLVTRSGRLLGIITKKDVLRHMAQMANQDPE). Residue 738-741 (TKKD) coordinates ATP.

The protein belongs to the chloride channel (TC 2.A.49) family. ClC-4/CLCN4 subfamily. As to quaternary structure, monomer. Forms heterodimers with CLCN3. As to expression, abundant in skeletal muscle and also detectable in brain and heart.

It is found in the early endosome membrane. The protein resides in the late endosome membrane. The protein localises to the endoplasmic reticulum membrane. It localises to the lysosome membrane. Its subcellular location is the recycling endosome membrane. In terms of biological role, strongly outwardly rectifying, electrogenic H(+)/Cl(-)exchanger which mediates the exchange of chloride ions against protons. The CLC channel family contains both chloride channels and proton-coupled anion transporters that exchange chloride or another anion for protons. The presence of conserved gating glutamate residues is typical for family members that function as antiporters. In Homo sapiens (Human), this protein is H(+)/Cl(-) exchange transporter 4 (CLCN4).